Consider the following 145-residue polypeptide: Secreted RxLR effector protein PSE1 (145 aa).

An N-terminal signal peptide occupies residues 1–21 (MRLSSFIVVGAAVVNLLTSGS). A RxLR-dEER motif is present at residues 53 to 73 (RLLRYHSNNNRGGDEDIAEER).

It belongs to the RxLR effector family.

The protein resides in the secreted. The protein localises to the host cell. Functionally, secreted effector that impairs both plant effector-triggered immunity and pathogen-associated molecular patterns (PAMP)-triggered immunity (PTI). Suppresses plant cell death as a part of the plant defense responses. Facilitates plant infection by altering the auxin content at the roots penetration points of the of the pathogen. This is Secreted RxLR effector protein PSE1 from Phytophthora nicotianae (Potato buckeye rot agent).